Consider the following 248-residue polypeptide: 3-deoxy-manno-octulosonate cytidylyltransferase (248 aa).

It belongs to the KdsB family.

It is found in the cytoplasm. It catalyses the reaction 3-deoxy-alpha-D-manno-oct-2-ulosonate + CTP = CMP-3-deoxy-beta-D-manno-octulosonate + diphosphate. Its pathway is nucleotide-sugar biosynthesis; CMP-3-deoxy-D-manno-octulosonate biosynthesis; CMP-3-deoxy-D-manno-octulosonate from 3-deoxy-D-manno-octulosonate and CTP: step 1/1. It participates in bacterial outer membrane biogenesis; lipopolysaccharide biosynthesis. Activates KDO (a required 8-carbon sugar) for incorporation into bacterial lipopolysaccharide in Gram-negative bacteria. In Chlorobaculum parvum (strain DSM 263 / NCIMB 8327) (Chlorobium vibrioforme subsp. thiosulfatophilum), this protein is 3-deoxy-manno-octulosonate cytidylyltransferase.